Consider the following 122-residue polypeptide: Basic phospholipase A2 homolog Gln49-PLA2 (122 aa).

7 cysteine pairs are disulfide-bonded: Cys-26/Cys-115, Cys-28/Cys-44, Cys-43/Cys-95, Cys-49/Cys-122, Cys-50/Cys-88, Cys-57/Cys-81, and Cys-75/Cys-86.

It belongs to the phospholipase A2 family. Group II subfamily. Q49 sub-subfamily. As to quaternary structure, monomer. Expressed by the venom gland.

It is found in the secreted. In terms of biological role, snake venom phospholipase A2 (PLA2) homolog that shows local myotoxicity, apparent anticoagulant activity, and neurotoxicity. Shows analgesic effect on mice due to a decrease of action potentials and nerve conduction velocity. These effects are caused by inhibition of voltage-gated ion channels (potassium (Kv) and sodium (Nav)). In addition, analgesic effects are antagonized by naloxone, implying the mechanism of action is correlated with opioid receptors (probably indirectly). Does not show detectable PLA2 activity on egg yolk phospholipids. This chain is Basic phospholipase A2 homolog Gln49-PLA2, found in Gloydius ussuriensis (Ussuri mamushi).